A 396-amino-acid polypeptide reads, in one-letter code: Elongation factor Tu (396 aa).

Residues 10 to 205 (KPHVNVGTIG…AVDEYIPTPE (196 aa)) form the tr-type G domain. The G1 stretch occupies residues 19–26 (GHVDHGKT). A GTP-binding site is contributed by 19–26 (GHVDHGKT). A Mg(2+)-binding site is contributed by Thr-26. Residues 61–65 (GITIA) are G2. A G3 region spans residues 82 to 85 (DCPG). GTP is bound by residues 82–86 (DCPGH) and 137–140 (NKTD). The G4 stretch occupies residues 137-140 (NKTD). The segment at 175 to 177 (SAL) is G5.

It belongs to the TRAFAC class translation factor GTPase superfamily. Classic translation factor GTPase family. EF-Tu/EF-1A subfamily. As to quaternary structure, monomer.

The protein localises to the cytoplasm. The catalysed reaction is GTP + H2O = GDP + phosphate + H(+). Its function is as follows. GTP hydrolase that promotes the GTP-dependent binding of aminoacyl-tRNA to the A-site of ribosomes during protein biosynthesis. The polypeptide is Elongation factor Tu (Salinibacter ruber (strain DSM 13855 / M31)).